A 184-amino-acid chain; its full sequence is Ribosome-recycling factor (184 aa).

It belongs to the RRF family.

It is found in the cytoplasm. Its function is as follows. Responsible for the release of ribosomes from messenger RNA at the termination of protein biosynthesis. May increase the efficiency of translation by recycling ribosomes from one round of translation to another. The protein is Ribosome-recycling factor of Lachnoclostridium phytofermentans (strain ATCC 700394 / DSM 18823 / ISDg) (Clostridium phytofermentans).